We begin with the raw amino-acid sequence, 193 residues long: ATP-dependent Clp protease proteolytic subunit (193 aa).

Catalysis depends on Ser98, which acts as the Nucleophile. The active site involves His123.

Belongs to the peptidase S14 family. As to quaternary structure, fourteen ClpP subunits assemble into 2 heptameric rings which stack back to back to give a disk-like structure with a central cavity, resembling the structure of eukaryotic proteasomes.

The protein localises to the cytoplasm. The catalysed reaction is Hydrolysis of proteins to small peptides in the presence of ATP and magnesium. alpha-casein is the usual test substrate. In the absence of ATP, only oligopeptides shorter than five residues are hydrolyzed (such as succinyl-Leu-Tyr-|-NHMec, and Leu-Tyr-Leu-|-Tyr-Trp, in which cleavage of the -Tyr-|-Leu- and -Tyr-|-Trp bonds also occurs).. Its function is as follows. Cleaves peptides in various proteins in a process that requires ATP hydrolysis. Has a chymotrypsin-like activity. Plays a major role in the degradation of misfolded proteins. The chain is ATP-dependent Clp protease proteolytic subunit from Lachnospira eligens (strain ATCC 27750 / DSM 3376 / VPI C15-48 / C15-B4) (Eubacterium eligens).